The following is a 400-amino-acid chain: Phosphoglycerate kinase (400 aa).

Residues 21–23, Arg37, 60–63, Arg121, and Arg154 contribute to the substrate site; these read DFN and HLGR. ATP is bound by residues Lys204, Glu326, and 355–358; that span reads GGDS.

Belongs to the phosphoglycerate kinase family. In terms of assembly, monomer.

The protein localises to the cytoplasm. The enzyme catalyses (2R)-3-phosphoglycerate + ATP = (2R)-3-phospho-glyceroyl phosphate + ADP. Its pathway is carbohydrate degradation; glycolysis; pyruvate from D-glyceraldehyde 3-phosphate: step 2/5. The polypeptide is Phosphoglycerate kinase (Chloroflexus aurantiacus (strain ATCC 29366 / DSM 635 / J-10-fl)).